Reading from the N-terminus, the 270-residue chain is Elongation factor Tu (270 aa).

The tr-type G domain occupies 1–103; that stretch reads GILVVSAADG…AVDDYIPTPE (103 aa). 35–38 serves as a coordination point for GTP; sequence NKVD.

Belongs to the TRAFAC class translation factor GTPase superfamily. Classic translation factor GTPase family. EF-Tu/EF-1A subfamily. Monomer.

The protein localises to the cytoplasm. The enzyme catalyses GTP + H2O = GDP + phosphate + H(+). Functionally, GTP hydrolase that promotes the GTP-dependent binding of aminoacyl-tRNA to the A-site of ribosomes during protein biosynthesis. This is Elongation factor Tu (tuf) from Staphylococcus warneri.